A 175-amino-acid polypeptide reads, in one-letter code: ATP synthase subunit b (175 aa).

Residues 20 to 40 (LIFWTAVTFVIVLLILKQLAW) traverse the membrane as a helical segment.

The protein belongs to the ATPase B chain family. As to quaternary structure, F-type ATPases have 2 components, F(1) - the catalytic core - and F(0) - the membrane proton channel. F(1) has five subunits: alpha(3), beta(3), gamma(1), delta(1), epsilon(1). F(0) has four main subunits: a(1), b(2) and c(10-14). The alpha and beta chains form an alternating ring which encloses part of the gamma chain. F(1) is attached to F(0) by a central stalk formed by the gamma and epsilon chains, while a peripheral stalk is formed by the delta and b chains.

The protein localises to the cell inner membrane. Its function is as follows. F(1)F(0) ATP synthase produces ATP from ADP in the presence of a proton or sodium gradient. F-type ATPases consist of two structural domains, F(1) containing the extramembraneous catalytic core and F(0) containing the membrane proton channel, linked together by a central stalk and a peripheral stalk. During catalysis, ATP synthesis in the catalytic domain of F(1) is coupled via a rotary mechanism of the central stalk subunits to proton translocation. Component of the F(0) channel, it forms part of the peripheral stalk, linking F(1) to F(0). The sequence is that of ATP synthase subunit b from Chlorobium limicola (strain DSM 245 / NBRC 103803 / 6330).